The primary structure comprises 1491 residues: MAYRKPSDLDGFIQQMPKADMRVKVQLAEDLVTFLSDDTNSIVCTDMGFLIDGLMPWLTGSHFKIAQKSLEAFSELIKRLGSDFNAYTATVLPHVIDRLGDSRDTVREKAQLLLRDLMEHRVLPPQALIDKLATSCFKHKNAKVREEFLQTIVNALHEYGTQQLSVRVYIPPVCALLGDPTVNVREAAIQTLVEIYKHVGDRLRPDLRRMDDVPASKLAMLEQKFDQVKQEGLLLPSALKNTNGNGVGLDEADNIGLRERPTRMIKRPLHSAVSSSLRPKPNVNDVTGDAGAVTMESFESSFEVVPQLNIFHAKDMDDIYKQVLVIISDKNADWEKRVDALKKIRALLILSYHTQPQFVAVQLKELSLSFVDILKEELRSQVIREACITIAYMSKTLRNKLDAFCWSILEHLINLIQNSAKVIASASTIALKYIIKYTHAPKLLKIYTDTLNQSKSKDIRSTLCELMVLLFEEWQTKALERNATVLRDTLKKSIGDADCDARRHSRYAYWAFRRHFPELADQIYGTLDIAAQRALEREREGGGGGGTGTGTGTAPETRRTVSRIGRTPGTLQKPTPSMRSISAVDTAAAQRAKVRAQYTLYSRQRKPLGPNNSNQASMTGAAASGSLPRPRLNSNSGGTPATTPGSVTPRPRGRAGVSQSQPGSRSTSPSTKLRDQYGGIGNYYRGATGAIPKKASGIPRSTASSRETSPTRSGGGLMKRSMYSTGAGSRRTPERNNPVRPSAAARLLAQSREAEHTLGVGDDGQPDYVSGDYMRSGGMRMGRKLMGRDESDDIDSEASSVCSERSFDSSYTRGNKSNYSLSGSHTRLDWSTQRAPFDDIETIIQFCASTHWSERKDGLISLTQYLADGKELTQQQLKCVLDMFRKMFMDTHTKVYSLFLDTVTELILVHANELHEWLFILLTRLFNKLGTDLLNSMHSKIWKTLQVVHEYFPTQLQLKELFRIISDSTQTPTTKTRIAILRFLTDLANTYCKSSDFPSDQSQACERTVLKLAQLAADQKSMELRSQARSCLVALYNLNTPQMTLLLADLPKVYQDSARSCIHSHMRRQSQSCNSGANSPSSSPLSSSSPKPLQSPSVGPFASLQSHHHQLSISSTSPRSRQSSVEQELLFSSELDIQHNIQKTSEEIRHCFGGQYQTALAPNGFNGHLQYHDQGQQDSCASLSSNSKTQSSANTTQSNTPESATMRLDNLERERTTQNAKSPTDDAKVITVSINMAENGELILASNLMESEVVRVALTLTKDQPVELLQTSLTNLGICIKGGNCELPNKHFRSIMRMLLNILEAEHTDVVIAGLHVLSKIMRSNKMRHNWMHFLELILLKIIQCYQHSKEALRDIDSMIPRIAPSLPLDLSINIVNPVIATGEFPTNLCAIKILLEVTEHHGSEITDAHLDIVFPNLARSADDTQSMVRKAAVFCIVKLYFVLGEEKVKPKLSVLNPSKVRLLNVYIEKQRNCISGGGSSTKNSSAASSS.

HEAT repeat units follow at residues 44–82, 85–123, 163–201, and 402–440; these read CTDMGFLIDGLMPWLTGSHFKIAQKSLEAFSELIKRLGS, NAYTATVLPHVIDRLGDSRDTVREKAQLLLRDLMEHRVL, QLSVRVYIPPVCALLGDPTVNVREAAIQTLVEIYKHVGD, and DAFCWSILEHLINLIQNSAKVIASASTIALKYIIKYTHA. Disordered stretches follow at residues 537 to 586 and 600 to 739; these read RERE…AVDT and LYSR…NNPV. A compositionally biased stretch (gly residues) spans 542-551; that stretch reads GGGGGTGTGT. The segment covering 569–580 has biased composition (polar residues); the sequence is GTLQKPTPSMRS. Ser-582, Ser-626, and Ser-634 each carry phosphoserine. Polar residues predominate over residues 632–646; the sequence is LNSNSGGTPATTPGS. Thr-648 bears the Phosphothreonine mark. 2 stretches are compositionally biased toward polar residues: residues 657 to 671 and 699 to 712; these read VSQSQPGSRSTSPST and PRSTASSRETSPTR. 5 positions are modified to phosphoserine: Ser-806, Ser-817, Ser-820, Ser-822, and Ser-824. HEAT repeat units lie at residues 874–912 and 955–993; these read QQQLKCVLDMFRKMFMDTHTKVYSLFLDTVTELILVHAN and QLQLKELFRIISDSTQTPTTKTRIAILRFLTDLANTYCK. Disordered stretches follow at residues 1065-1127 and 1167-1205; these read HMRR…SVEQ and GHLQYHDQGQQDSCASLSSNSKTQSSANTTQSNTPESAT. 3 stretches are compositionally biased toward low complexity: residues 1070–1097, 1111–1124, and 1181–1200; these read SQSCNSGANSPSSSPLSSSSPKPLQSPS, LSISSTSPRSRQSS, and ASLSSNSKTQSSANTTQSNT. 3 positions are modified to phosphoserine: Ser-1120, Ser-1123, and Ser-1124. 2 HEAT repeats span residues 1289-1327 and 1408-1446; these read NKHFRSIMRMLLNILEAEHTDVVIAGLHVLSKIMRSNKM and DAHLDIVFPNLARSADDTQSMVRKAAVFCIVKLYFVLGE.

Belongs to the CLASP family. Interacts with CLIP-190 and microtubules. As to expression, expressed in testis and ovary.

It localises to the cytoplasm. It is found in the cytoskeleton. The protein resides in the nucleus. Its subcellular location is the microtubule organizing center. The protein localises to the centrosome. It localises to the spindle. It is found in the cell projection. The protein resides in the growth cone. Its subcellular location is the cleavage furrow. Its function is as follows. Microtubule plus-end tracking protein that promotes the stabilization of dynamic microtubules. Required for several aspects of mitotic spindle formation including the formation of the overlapping central spindle microtubules and kinetochore attachment. Required for the incorporation of tubulin subunits at the plus ends of kinetochore microtubules during poleward microtubule flux. Acts antagonistically to Klp10A and Klp67A to maintain metaphase spindle length. Also required for guidance of CNS axons downstream of Abl. May function to identify a subset of microtubules that probe the peripheral growth cone domain, where guidance signals exert their influence on cytoskeletal organization. Also required during oogenesis for the organization of the polarized microtubule network inside the 16-cell cyst that ensures oocyte differentiation. This chain is CLIP-associating protein (chb), found in Drosophila melanogaster (Fruit fly).